The sequence spans 862 residues: MEPVSHQDMPRLSWIDTLYSNFNYGTDGYDAEGNEEHKNSREGSETMPYIDESPTMSPQLSARSQDSVDGVSPTPTEVLLPGGESESDKGLLMRKLVLSGVLASEEIYINQLEALLLPMKPLKATASTSQPVLTLQQINDIFYKIEDIYQMHKDFYDKLCPIVQQWDNKTTVGHLFQKLATQLGVYKAFVDNYKFALETAEKCSQCNVQFFKISEDLKVKGPKDSKEQPQSVTMEALLYKPIDRVTRSTLVLHDLLKHTPTDHPDYPLLQDALRISQNFLSSINEDIDPRRTAVTTPKGEPRQLVKDGFLVELSENSRKLRHLFLFTDLLLCAKLKKTTVGKHQQYDCKWYIPLADLVFPSLEESEPIHQLHATPDYEIEEMKAKISVLKSEIQKEKKSNKGSSRAIERLKKKMFEYESWLLLYSPTIPFRIHNKNGKSYLFLLSSDYERSEWREAIQKLQKKDLQALALSPFELQVLTASCFKLRTVHNVPIISHKDDDESPGLYGFLHVIVKSAKGFSHSSNFYCTLEVDSFGYFVSKAKTRVFRDTSEPEWNEEFEIELEGSQCLRILCYETCYDKSKLNKDNNEIVDKIMGKGQIQLDPQGVQSKNWHDDVIEMNGIKVEFSMKFSSRDMSLKRTPSKKQTGVFGVKISVVTKRERSKVPYIVRQCIEEVEKRGIEEVGIYRISGVATDIQALKAAFDANSKDILMMLSDMDINAIAGTLKLYFRELPEPLLTDRLYLAFMEGIALSDPAAKENCMMHLLRSLPDPNLITFLFLLHHLKKVAENEPINKMSLHNLATVFGPTLLRPSEVEIKGHMNLASDIWSHDVMAQVQVLLYYLQHPPISFSELKRSTLYYSTDV.

The interval 29-84 (YDAEGNEEHKNSREGSETMPYIDESPTMSPQLSARSQDSVDGVSPTPTEVLLPGGE) is disordered. The span at 34 to 44 (NEEHKNSREGS) shows a compositional bias: basic and acidic residues. Residues 54–67 (PTMSPQLSARSQDS) are compositionally biased toward polar residues. Positions 93–286 (MRKLVLSGVL…QNFLSSINED (194 aa)) constitute a DH domain. The PH domain occupies 303–462 (QLVKDGFLVE…WREAIQKLQK (160 aa)). A C2 domain is found at 488–616 (VHNVPIISHK…QSKNWHDDVI (129 aa)). A Rho-GAP domain is found at 650–848 (VKISVVTKRE…YYLQHPPISF (199 aa)).

Its subcellular location is the cell projection. The protein localises to the dendritic spine. It localises to the axon. The protein resides in the synapse. Functionally, protein with a unique structure having two opposing regulatory activities toward small GTP-binding proteins. The C-terminus is a GTPase-activating protein domain which stimulates GTP hydrolysis by RAC1, RAC2 and CDC42. Accelerates the intrinsic rate of GTP hydrolysis of RAC1 or CDC42, leading to down-regulation of the active GTP-bound form. The central Dbl homology (DH) domain functions as guanine nucleotide exchange factor (GEF) that modulates the GTPases CDC42, RHOA and RAC1. Promotes the conversion of CDC42, RHOA and RAC1 from the GDP-bound to the GTP-bound form. This Xenopus laevis (African clawed frog) protein is Active breakpoint cluster region-related protein (abr).